Here is a 466-residue protein sequence, read N- to C-terminus: Asparagine--tRNA ligase (466 aa).

This sequence belongs to the class-II aminoacyl-tRNA synthetase family. In terms of assembly, homodimer.

It localises to the cytoplasm. It catalyses the reaction tRNA(Asn) + L-asparagine + ATP = L-asparaginyl-tRNA(Asn) + AMP + diphosphate + H(+). This is Asparagine--tRNA ligase from Buchnera aphidicola subsp. Acyrthosiphon pisum (strain APS) (Acyrthosiphon pisum symbiotic bacterium).